The chain runs to 588 residues: Aspartate--tRNA ligase (588 aa).

Glutamate 177 provides a ligand contact to L-aspartate. The segment at 201–204 (QIFK) is aspartate. L-aspartate is bound at residue arginine 223. Residues 223–225 (RDE) and glutamine 232 contribute to the ATP site. Histidine 451 serves as a coordination point for L-aspartate. An ATP-binding site is contributed by glutamate 485. Arginine 492 lines the L-aspartate pocket. An ATP-binding site is contributed by 537–540 (GLDR).

This sequence belongs to the class-II aminoacyl-tRNA synthetase family. Type 1 subfamily. In terms of assembly, homodimer.

It localises to the cytoplasm. The catalysed reaction is tRNA(Asp) + L-aspartate + ATP = L-aspartyl-tRNA(Asp) + AMP + diphosphate. Its function is as follows. Catalyzes the attachment of L-aspartate to tRNA(Asp) in a two-step reaction: L-aspartate is first activated by ATP to form Asp-AMP and then transferred to the acceptor end of tRNA(Asp). The sequence is that of Aspartate--tRNA ligase from Staphylococcus saprophyticus subsp. saprophyticus (strain ATCC 15305 / DSM 20229 / NCIMB 8711 / NCTC 7292 / S-41).